The sequence spans 860 residues: Envelope glycoprotein gp160 (860 aa).

The signal sequence occupies residues 1 to 22 (MEPGRNQLFVVILLTSACLVYC). At 23-678 (SQYVTVFYGI…LTSWVKYIQY (656 aa)) the chain is on the extracellular side. An N-linked (GlcNAc...) asparagine; by host glycan is attached at Asn37. Cys44 and Cys57 are joined by a disulfide. N-linked (GlcNAc...) asparagine; by host glycosylation is found at Asn70, Asn79, Asn112, Asn119, Asn144, Asn152, Asn194, Asn206, Asn238, Asn241, Asn272, Asn278, Asn289, Asn300, Asn310, Asn365, Asn371, Asn398, Asn410, Asn460, and Asn465. 5 cysteine pairs are disulfide-bonded: Cys101–Cys214, Cys108–Cys205, Cys113–Cys166, Cys227–Cys257, and Cys237–Cys249. The V1 stretch occupies residues 113-165 (CSRVQGNTTTPNPRTSSSTTSRPPTSAASIINETSNCIENNTCAGLGYEEMMQ). The interval 118–139 (GNTTTPNPRTSSSTTSRPPTSA) is disordered. The span at 119–139 (NTTTPNPRTSSSTTSRPPTSA) shows a compositional bias: low complexity. The segment at 166-205 (CEFNMKGLEQDKKRRYKDTWYLEDVVCDNTTAGTCYMRHC) is V2. The segment at 305-337 (CKRPGNKTVLPITLMSGLVFHSQPINTRPRQAW) is V3. An intrachain disulfide couples Cys305 to Cys338. Intrachain disulfides connect Cys390–Cys444 and Cys397–Cys417. Positions 397 to 417 (CNMTWFLNWVEDKNQTRRNYC) are V4. A V5 region spans residues 460 to 468 (NRTHTNITF). Residues 511–531 (GVFVLGFLGFLATAGSAMGAR) are fusion peptide. Residues 574–590 (LQARVTAIEKYLKHQAQ) are immunosuppression. Asn610, Asn619, and Asn635 each carry an N-linked (GlcNAc...) asparagine; by host glycan. Residues 623-644 (QEWEKQVRYLEANISQSLEEAQ) are a coiled coil. The tract at residues 656-677 (KLNSWDILGNWFDLTSWVKYIQ) is MPER; binding to GalCer. Residues 679–699 (GVHIVVGIIALRIAIYVVQLL) traverse the membrane as a helical segment. Topologically, residues 700–860 (SRFRKGYRPV…IRQGAELALL (161 aa)) are cytoplasmic. The short motif at 706–709 (YRPV) is the YXXV motif; contains endocytosis signal element. Cys772 carries the S-palmitoyl cysteine; by host lipid modification. A Di-leucine internalization motif motif is present at residues 859–860 (LL).

As to quaternary structure, the mature envelope protein (Env) consists of a homotrimer of non-covalently associated gp120-gp41 heterodimers. The resulting complex protrudes from the virus surface as a spike. There seems to be as few as 10 spikes on the average virion. Interacts with human CD4, CCR5 and CXCR4, to form a P4HB/PDI-CD4-CXCR4-gp120 complex. Gp120 also interacts with the C-type lectins CD209/DC-SIGN and CLEC4M/DC-SIGNR (collectively referred to as DC-SIGN(R)). Gp120 and gp41 interact with GalCer. The mature envelope protein (Env) consists of a homotrimer of non-covalently associated gp120-gp41 heterodimers. The resulting complex protrudes from the virus surface as a spike. There seems to be as few as 10 spikes on the average virion. In terms of processing, specific enzymatic cleavages in vivo yield mature proteins. Envelope glycoproteins are synthesized as an inactive precursor that is heavily N-glycosylated and processed likely by host cell furin in the Golgi to yield the mature SU and TM proteins. The cleavage site between SU and TM requires the minimal sequence [KR]-X-[KR]-R. Post-translationally, palmitoylation of the transmembrane protein and of Env polyprotein (prior to its proteolytic cleavage) is essential for their association with host cell membrane lipid rafts. Palmitoylation is therefore required for envelope trafficking to classical lipid rafts, but not for viral replication.

The protein localises to the virion membrane. The protein resides in the host cell membrane. It localises to the host endosome membrane. Functionally, the surface protein gp120 (SU) attaches the virus to the host lymphoid cell by binding to the primary receptor CD4. This interaction induces a structural rearrangement creating a high affinity binding site for a chemokine coreceptor like CXCR4 and/or CCR5. This peculiar 2 stage receptor-interaction strategy allows gp120 to maintain the highly conserved coreceptor-binding site in a cryptic conformation, protected from neutralizing antibodies. Since CD4 also displays a binding site for the disulfide-isomerase P4HB/PDI, a P4HB/PDI-CD4-CXCR4-gp120 complex may form. In that complex, P4HB/PDI could reach and reduce gp120 disulfide bonds, causing major conformational changes in gp120. TXN, another PDI family member could also be involved in disulfide rearrangements in Env during fusion. These changes are transmitted to the transmembrane protein gp41 and are thought to activate its fusogenic potential by unmasking its fusion peptide. The surface protein gp120 is a ligand for CD209/DC-SIGN and CLEC4M/DC-SIGNR, which are respectively found on dendritic cells (DCs), and on endothelial cells of liver sinusoids and lymph node sinuses. These interactions allow capture of viral particles at mucosal surfaces by these cells and subsequent transmission to permissive cells. DCs are professional antigen presenting cells, critical for host immunity by inducing specific immune responses against a broad variety of pathogens. They act as sentinels in various tissues where they take up antigen, process it, and present it to T-cells following migration to lymphoid organs. HIV subverts the migration properties of dendritic cells to gain access to CD4+ T-cells in lymph nodes. Virus transmission to permissive T-cells occurs either in trans (without DCs infection, through viral capture and transmission), or in cis (following DCs productive infection, through the usual CD4-gp120 interaction), thereby inducing a robust infection. In trans infection, bound virions remain infectious over days and it is proposed that they are not degraded, but protected in non-lysosomal acidic organelles within the DCs close to the cell membrane thus contributing to the viral infectious potential during DCs' migration from the periphery to the lymphoid tissues. On arrival at lymphoid tissues, intact virions recycle back to DCs' cell surface allowing virus transmission to CD4+ T-cells. Virion capture also seems to lead to MHC-II-restricted viral antigen presentation, and probably to the activation of HIV-specific CD4+ cells. In terms of biological role, the transmembrane protein gp41 (TM) acts as a class I viral fusion protein. Under the current model, the protein has at least 3 conformational states: pre-fusion native state, pre-hairpin intermediate state, and post-fusion hairpin state. During fusion of viral and target intracellular membranes, the coiled coil regions (heptad repeats) assume a trimer-of-hairpins structure, positioning the fusion peptide in close proximity to the C-terminal region of the ectodomain. The formation of this structure appears to drive apposition and subsequent fusion of viral and target cell membranes. Complete fusion occurs in host cell endosomes and is dynamin-dependent, however some lipid transfer might occur at the plasma membrane. The virus undergoes clathrin-dependent internalization long before endosomal fusion, thus minimizing the surface exposure of conserved viral epitopes during fusion and reducing the efficacy of inhibitors targeting these epitopes. Membranes fusion leads to delivery of the nucleocapsid into the cytoplasm. Its function is as follows. The envelope glycoprotein gp160 precursor down-modulates cell surface CD4 antigen by interacting with it in the endoplasmic reticulum and blocking its transport to the cell surface. Functionally, the gp120-gp41 heterodimer seems to contribute to T-cell depletion during HIV-1 infection. The envelope glycoproteins expressed on the surface of infected cells induce apoptosis through an interaction with uninfected cells expressing the receptor (CD4) and the coreceptors CXCR4 or CCR5. This type of bystander killing may be obtained by at least three distinct mechanisms. First, the interaction between the 2 cells can induce cellular fusion followed by nuclear fusion within the syncytium. Syncytia are condemned to die from apoptosis. Second, the 2 interacting cells may not fuse entirely and simply exchange plasma membrane lipids, after a sort of hemifusion process, followed by rapid death. Third, it is possible that virus-infected cells, on the point of undergoing apoptosis, fuse with CD4-expressing cells, in which case apoptosis is rapidly transmitted from one cell to the other and thus occurs in a sort of contagious fashion. The gp120-gp41 heterodimer allows rapid transcytosis of the virus through CD4 negative cells such as simple epithelial monolayers of the intestinal, rectal and endocervical epithelial barriers. Both gp120 and gp41 specifically recognize glycosphingolipids galactosyl-ceramide (GalCer) or 3' sulfo-galactosyl-ceramide (GalS) present in the lipid rafts structures of epithelial cells. Binding to these alternative receptors allows the rapid transcytosis of the virus through the epithelial cells. This transcytotic vesicle-mediated transport of virions from the apical side to the basolateral side of the epithelial cells does not involve infection of the cells themselves. The polypeptide is Envelope glycoprotein gp160 (env) (Homo sapiens (Human)).